Reading from the N-terminus, the 697-residue chain is tRNA 5-methylaminomethyl-2-thiouridine biosynthesis bifunctional protein MnmC (697 aa).

The tRNA (mnm(5)s(2)U34)-methyltransferase stretch occupies residues 1 to 269 (MNKTPLLSVS…LRQQLQQQFA (269 aa)). The interval 287-697 (IGGGIASASL…RKLLKGKALM (411 aa)) is FAD-dependent cmnm(5)s(2)U34 oxidoreductase.

This sequence in the N-terminal section; belongs to the methyltransferase superfamily. tRNA (mnm(5)s(2)U34)-methyltransferase family. It in the C-terminal section; belongs to the DAO family. FAD is required as a cofactor.

The protein localises to the cytoplasm. It carries out the reaction 5-aminomethyl-2-thiouridine(34) in tRNA + S-adenosyl-L-methionine = 5-methylaminomethyl-2-thiouridine(34) in tRNA + S-adenosyl-L-homocysteine + H(+). In terms of biological role, catalyzes the last two steps in the biosynthesis of 5-methylaminomethyl-2-thiouridine (mnm(5)s(2)U) at the wobble position (U34) in tRNA. Catalyzes the FAD-dependent demodification of cmnm(5)s(2)U34 to nm(5)s(2)U34, followed by the transfer of a methyl group from S-adenosyl-L-methionine to nm(5)s(2)U34, to form mnm(5)s(2)U34. This is tRNA 5-methylaminomethyl-2-thiouridine biosynthesis bifunctional protein MnmC from Shewanella frigidimarina (strain NCIMB 400).